A 161-amino-acid polypeptide reads, in one-letter code: Cytochrome c-type biogenesis protein CcmE (161 aa).

At 1–8 (MNARRKKR) the chain is on the cytoplasmic side. A helical; Signal-anchor for type II membrane protein membrane pass occupies residues 9–29 (LALATALIGGVAAIASLLLYA). Residues 30–161 (LNSNLNLFYT…DYNAEQKSGY (132 aa)) are Periplasmic-facing. Residues H131 and Y135 each coordinate heme.

It belongs to the CcmE/CycJ family.

It is found in the cell inner membrane. Its function is as follows. Heme chaperone required for the biogenesis of c-type cytochromes. Transiently binds heme delivered by CcmC and transfers the heme to apo-cytochromes in a process facilitated by CcmF and CcmH. The protein is Cytochrome c-type biogenesis protein CcmE of Shewanella woodyi (strain ATCC 51908 / MS32).